The following is a 160-amino-acid chain: Small ribosomal subunit protein bS6 (160 aa).

It belongs to the bacterial ribosomal protein bS6 family.

Binds together with bS18 to 16S ribosomal RNA. In Ureaplasma parvum serovar 3 (strain ATCC 27815 / 27 / NCTC 11736), this protein is Small ribosomal subunit protein bS6.